A 651-amino-acid polypeptide reads, in one-letter code: MMNQSQRMAPVGSDKELSDLLDFSMMFPLPVANGKSRPASLGGTQFAGSGLEDRPSSGSWGSSDQNSSSFDPSRTYSEGAHFSDSHSSLPPSTFLGAGLGGKGSERNAYATFGRDTSVGTLSQAGFLPGELSLSSPGPLSPSGIKSSSQYYPSFPSNPRRRAADGGLDTQPKKVRKVPPGLPSSVYPPSSGDSYSRDAAAYPSAKTPSSAYPSPFYVADGSLHPSAELWSTPSQVGFGPMLGDGSSPLPLAPGSSSVGSGTFGGLQQQDRMGYQLHGSEVNGSLPAVSSFSAAPGTYSGTSGHTPPVSGAAAESLLGTRGTTASSSGDALGKALASIYSPDHSSNNFSPSPSTPVGSPQGLPGTSQWPRAGAPSALSPNYDAGLHGLSKMEDRLDEAIHVLRSHAVGTASDLHGLLPGHGALTTSFTGPMSLGGRHAGLVGGSHPEEGLTSGASLLHNHASLPSQPSSLPDLSQRPPDSYSGLGRAGTTAGASEIKREEKEDEEIASVADAEEDKKDLKVPRTRTSPDEDEDDLLPPEQKAEREKERRVANNARERLRVRDINEAFKELGRMCQLHLSSEKPQTKLLILHQAVAVILSLEQQVRERNLNPKAACLKRREEEKVSGVVGDPQLALSAAHPGLGEAHNPAGHL.

Disordered stretches follow at residues 32–107 (ANGK…SERN), 131–208 (LSLS…KTPS), and 341–378 (DHSS…ALSP). Composition is skewed to low complexity over residues 56–73 (SSGS…FDPS), 131–148 (LSLS…KSSS), and 341–354 (DHSS…PSTP). S135 and S140 each carry phosphoserine. T353 carries the post-translational modification Phosphothreonine. S357 carries the post-translational modification Phosphoserine. Omega-N-methylarginine is present on R369. At S377 the chain carries Phosphoserine. The segment at 387-422 (LSKMEDRLDEAIHVLRSHAVGTASDLHGLLPGHGAL) is leucine-zipper. Residues 457–549 (HNHASLPSQP…KAEREKERRV (93 aa)) form a disordered region. A compositionally biased stretch (low complexity) spans 461 to 479 (SLPSQPSSLPDLSQRPPDS). Residue K496 forms a Glycyl lysine isopeptide (Lys-Gly) (interchain with G-Cter in SUMO2) linkage. Phosphoserine is present on S526. The residue at position 528 (D528) is a Phosphothreonine. Phosphoserine is present on D533. Positions 539–549 (QKAEREKERRV) are enriched in basic and acidic residues. Residues 546–599 (ERRVANNARERLRVRDINEAFKELGRMCQLHLSSEKPQTKLLILHQAVAVILSL) enclose the bHLH domain. K622 is covalently cross-linked (Glycyl lysine isopeptide (Lys-Gly) (interchain with G-Cter in SUMO2)).

In terms of assembly, homodimer. Heterodimer; efficient DNA binding requires dimerization with another bHLH protein. Forms a heterodimer with TWIST1 and TWIST2. Forms a heterodimer with NEUROD1; the heterodimer is inhibited in presence of ID2, but not NR0B2, to E-box element. Forms a heterodimer with TCF15; the heterodimer binds E-box element. Forms a heterodimer with MYOG; heterodimerization enhances MYOG DNA-binding and transcriptional activities. Forms a heterodimer with ATOH8; repress transcription of TCF3 and TCF3-NEUROG3 dimer-induced transactivation of E box-dependent promoters. Component of a nuclear TAL-1 complex composed at least of CBFA2T3, LDB1, TAL1 and TCF3. Interacts with NEUROD2. Interacts with EP300. Interacts with PTF1A, TGFB1I1 and UBE2I. Interacts with BHLHA9. Interacts with ASB2; the interaction is mediated by SKP2 and targets TCF3 for Notch-induced proteasomal degradation. Interacts with transcription factor ASCL5/AmeloD. Forms a heterodimer with ATOH7; required for ATOH7 DNA-binding. As to quaternary structure, interacts with RALGAPA1. Interacts with FIGLA. In terms of processing, phosphorylated following NGF stimulation. Undergoes Notch-induced ubiquitination and subsequent proteasomal degradation which is mediated by ASB1 or ASB2, the substrate-recognition components of probable ECS E3 ubiquitin-protein ligase complexes.

It localises to the nucleus. Functionally, transcriptional regulator involved in the initiation of neuronal differentiation and mesenchymal to epithelial transition. Heterodimers between TCF3 and tissue-specific basic helix-loop-helix (bHLH) proteins play major roles in determining tissue-specific cell fate during embryogenesis, like muscle or early B-cell differentiation. Together with TCF15, required for the mesenchymal to epithelial transition. Dimers bind DNA on E-box motifs: 5'-CANNTG-3'. Binds to the kappa-E2 site in the kappa immunoglobulin gene enhancer. Binds to IEB1 and IEB2, which are short DNA sequences in the insulin gene transcription control region. In terms of biological role, facilitates ATOH7 binding to DNA at the consensus sequence 5'-CAGGTG-3', and positively regulates transcriptional activity. The sequence is that of Transcription factor E2-alpha (Tcf3) from Mus musculus (Mouse).